A 362-amino-acid polypeptide reads, in one-letter code: 3-dehydroquinate synthase (362 aa).

NAD(+) is bound by residues 71–76 (DGEQYK), 105–109 (GVIGD), 129–130 (TT), Lys142, Lys151, and 169–172 (CLST). Zn(2+) contacts are provided by Glu184, His247, and His264.

Belongs to the sugar phosphate cyclases superfamily. Dehydroquinate synthase family. Requires Co(2+) as cofactor. Zn(2+) is required as a cofactor. It depends on NAD(+) as a cofactor.

The protein localises to the cytoplasm. The enzyme catalyses 7-phospho-2-dehydro-3-deoxy-D-arabino-heptonate = 3-dehydroquinate + phosphate. It participates in metabolic intermediate biosynthesis; chorismate biosynthesis; chorismate from D-erythrose 4-phosphate and phosphoenolpyruvate: step 2/7. Functionally, catalyzes the conversion of 3-deoxy-D-arabino-heptulosonate 7-phosphate (DAHP) to dehydroquinate (DHQ). In Vibrio atlanticus (strain LGP32) (Vibrio splendidus (strain Mel32)), this protein is 3-dehydroquinate synthase.